Reading from the N-terminus, the 430-residue chain is Glutamate-1-semialdehyde 2,1-aminomutase (430 aa).

K265 carries the post-translational modification N6-(pyridoxal phosphate)lysine.

This sequence belongs to the class-III pyridoxal-phosphate-dependent aminotransferase family. HemL subfamily. In terms of assembly, homodimer. Requires pyridoxal 5'-phosphate as cofactor.

The protein localises to the cytoplasm. The catalysed reaction is (S)-4-amino-5-oxopentanoate = 5-aminolevulinate. Its pathway is porphyrin-containing compound metabolism; protoporphyrin-IX biosynthesis; 5-aminolevulinate from L-glutamyl-tRNA(Glu): step 2/2. The sequence is that of Glutamate-1-semialdehyde 2,1-aminomutase from Shewanella baltica (strain OS155 / ATCC BAA-1091).